The following is a 219-amino-acid chain: Endonuclease III (219 aa).

Residues 117–136 (MEELLTLPGVARKTANVVLA) enclose the HhH domain. [4Fe-4S] cluster is bound by residues cysteine 197, cysteine 204, cysteine 207, and cysteine 213.

This sequence belongs to the Nth/MutY family. [4Fe-4S] cluster is required as a cofactor.

The catalysed reaction is 2'-deoxyribonucleotide-(2'-deoxyribose 5'-phosphate)-2'-deoxyribonucleotide-DNA = a 3'-end 2'-deoxyribonucleotide-(2,3-dehydro-2,3-deoxyribose 5'-phosphate)-DNA + a 5'-end 5'-phospho-2'-deoxyribonucleoside-DNA + H(+). In terms of biological role, DNA repair enzyme that has both DNA N-glycosylase activity and AP-lyase activity. The DNA N-glycosylase activity releases various damaged pyrimidines from DNA by cleaving the N-glycosidic bond, leaving an AP (apurinic/apyrimidinic) site. The AP-lyase activity cleaves the phosphodiester bond 3' to the AP site by a beta-elimination, leaving a 3'-terminal unsaturated sugar and a product with a terminal 5'-phosphate. This Synechocystis sp. (strain ATCC 27184 / PCC 6803 / Kazusa) protein is Endonuclease III.